The sequence spans 556 residues: Genetic interactor of prohibitins 3, mitochondrial (556 aa).

The transit peptide at 1 to 21 (MLNLCHALRGVRQFSCSVIVK) directs the protein to the mitochondrion. In terms of domain architecture, CP-type G spans 113–305 (ESTLNDILNY…LFDLPGYSTS (193 aa)).

The protein belongs to the TRAFAC class YlqF/YawG GTPase family. GEP3 subfamily.

Its subcellular location is the mitochondrion. In terms of biological role, interacts genetically with prohibitins and thus may be involved in the mitochondrial lipid metabolism. This chain is Genetic interactor of prohibitins 3, mitochondrial (GEP3), found in Saccharomyces cerevisiae (strain ATCC 204508 / S288c) (Baker's yeast).